Reading from the N-terminus, the 666-residue chain is MINFSLSLTKSMSYSFIWMLFVIHISCVLSADGNHILCSPSFTCGNQRGLLYPFWIAGRKECGHPDFELDCNAGVPELSISSVKFRILGADYDSGIITLARSDNIDDPCLPNSFTTSFNETVLPLASTTDLLTIYYDCNRNVSSFVSTFVKELDCPDDGTDDRRNYYLTRNLTFLPPSLKLEGNSFLLNDFGGSCSRNVSNPASRTALNTLESTPSTDNLKIALEDGFALEVNSDCRTCIDSKGACGFSQTSSRFVCYYRQEPQNPTRNKVILKLFFIVIYVLGIGAASFAMMGVILVVTCLNCLIRRQRKTLNDPRMRTSDDSRQQNLKALIPLKHYSYAQVTSITKSFAEVIGKGGFGTVYRGTLYDGRSVAVKVLKESQGNGEDFINEVASMSQTSHVNIVTLLGFCSEGYKRAIIYEFMENGSLDKFISSKKSSTMDWRELYGIALGVARGLEYLHHGCRTRIVHFDIKPQNVLLDDNLSPKVSDFGLAKLCERKESILSLMDTRGTIGYIAPEVFSRVYGRVSHKSDVYSYGMLVLDIIGARNKTSTEDTTSSTSSMYFPEWIYRDLEKAHNGKSIETAISNEEDEIAKKMTLVGLWCIQPWPLDRPAMNRVVEMMEGNLDALEVPPRPVLQQIPTATLQESSTFSEDISAYTEICSINVA.

Residues 1 to 30 (MINFSLSLTKSMSYSFIWMLFVIHISCVLS) form the signal peptide. At 31 to 275 (ADGNHILCSP…PTRNKVILKL (245 aa)) the chain is on the extracellular side. N-linked (GlcNAc...) asparagine glycans are attached at residues Asn119, Asn141, Asn171, and Asn198. Residues 276–296 (FFIVIYVLGIGAASFAMMGVI) traverse the membrane as a helical segment. The Cytoplasmic portion of the chain corresponds to 297–666 (LVVTCLNCLI…YTEICSINVA (370 aa)). Residues 348–636 (KSFAEVIGKG…ALEVPPRPVL (289 aa)) enclose the Protein kinase domain. Residues 354 to 362 (IGKGGFGTV) and Lys376 each bind ATP. Residue Tyr420 is modified to Phosphotyrosine. Asp471 functions as the Proton acceptor in the catalytic mechanism. A phosphothreonine mark is found at Thr508 and Thr511.

Belongs to the protein kinase superfamily. Ser/Thr protein kinase family.

It localises to the membrane. It carries out the reaction L-seryl-[protein] + ATP = O-phospho-L-seryl-[protein] + ADP + H(+). The catalysed reaction is L-threonyl-[protein] + ATP = O-phospho-L-threonyl-[protein] + ADP + H(+). This chain is LEAF RUST 10 DISEASE-RESISTANCE LOCUS RECEPTOR-LIKE PROTEIN KINASE-like 2.5, found in Arabidopsis thaliana (Mouse-ear cress).